A 68-amino-acid polypeptide reads, in one-letter code: Large ribosomal subunit protein uL29 (68 aa).

The protein belongs to the universal ribosomal protein uL29 family.

This is Large ribosomal subunit protein uL29 from Methanobrevibacter smithii (strain ATCC 35061 / DSM 861 / OCM 144 / PS).